We begin with the raw amino-acid sequence, 218 residues long: Small ribosomal subunit protein uS3 (218 aa).

One can recognise a KH type-2 domain in the interval 38 to 106 (IRTFLKKKLY…KLVVDIKEVK (69 aa)).

The protein belongs to the universal ribosomal protein uS3 family. In terms of assembly, part of the 30S ribosomal subunit. Forms a tight complex with proteins S10 and S14.

Binds the lower part of the 30S subunit head. Binds mRNA in the 70S ribosome, positioning it for translation. The polypeptide is Small ribosomal subunit protein uS3 (Agathobacter rectalis (strain ATCC 33656 / DSM 3377 / JCM 17463 / KCTC 5835 / VPI 0990) (Eubacterium rectale)).